The following is a 266-amino-acid chain: MTTLSTLNKFKKDGTKFTCLTCYDAMFARMMEKAQIDTILIGDSLGMVVQGHDSTLPVTVDDMAYHTANIARSNKQALILADLPFMSYVTLPEAVVNSRKLMQAGAHVIKIEGGCELCELITTLAQAGTPTCVHLGLTPQSVNVFGGYKVQGRGNEAGQKLLDDAKAVVDAGAALLVLECVPAELAKAVTEAVAVPVIGIGAGADTDGQVLVMHDMLGMVHGRAPRFIHDFLTDERNTEHSIEGAFALYQQSVKEGSFPTEQHQFS.

2 residues coordinate Mg(2+): Asp43 and Asp82. Residues 43–44 (DS), Asp82, and Lys110 each bind 3-methyl-2-oxobutanoate. A Mg(2+)-binding site is contributed by Glu112. Glu179 functions as the Proton acceptor in the catalytic mechanism.

Belongs to the PanB family. Homodecamer; pentamer of dimers. The cofactor is Mg(2+).

The protein localises to the cytoplasm. The enzyme catalyses 3-methyl-2-oxobutanoate + (6R)-5,10-methylene-5,6,7,8-tetrahydrofolate + H2O = 2-dehydropantoate + (6S)-5,6,7,8-tetrahydrofolate. It participates in cofactor biosynthesis; (R)-pantothenate biosynthesis; (R)-pantoate from 3-methyl-2-oxobutanoate: step 1/2. Catalyzes the reversible reaction in which hydroxymethyl group from 5,10-methylenetetrahydrofolate is transferred onto alpha-ketoisovalerate to form ketopantoate. This chain is 3-methyl-2-oxobutanoate hydroxymethyltransferase, found in Psychrobacter cryohalolentis (strain ATCC BAA-1226 / DSM 17306 / VKM B-2378 / K5).